A 248-amino-acid polypeptide reads, in one-letter code: ATP synthase delta chain, chloroplastic (248 aa).

A chloroplast-targeting transit peptide spans 1 to 60; that stretch reads MAALQQTPITFQSRSPPPTQIISGPTAKLSFSGGLKLPKLTIKLRSNRTSRRGGGAAGSK.

It belongs to the ATPase delta chain family. F-type ATPases have 2 components, CF(1) - the catalytic core - and CF(0) - the membrane proton channel. CF(1) has five subunits: alpha(3), beta(3), gamma(1), delta(1), epsilon(1). CF(0) has three main subunits: a, b and c.

It is found in the plastid. The protein localises to the chloroplast thylakoid membrane. Its function is as follows. This protein seems to be part of the stalk that links CF(0) to CF(1). It either transmits conformational changes from CF(0) into CF(1) or is implicated in proton conduction. The sequence is that of ATP synthase delta chain, chloroplastic (ATPD) from Nicotiana tabacum (Common tobacco).